Reading from the N-terminus, the 296-residue chain is 4-hydroxy-tetrahydrodipicolinate synthase (296 aa).

Position 45 (threonine 45) interacts with pyruvate. The active-site Proton donor/acceptor is the tyrosine 133. The active-site Schiff-base intermediate with substrate is the lysine 161. Pyruvate is bound at residue isoleucine 203.

The protein belongs to the DapA family. As to quaternary structure, homotetramer; dimer of dimers.

The protein localises to the cytoplasm. It carries out the reaction L-aspartate 4-semialdehyde + pyruvate = (2S,4S)-4-hydroxy-2,3,4,5-tetrahydrodipicolinate + H2O + H(+). Its pathway is amino-acid biosynthesis; L-lysine biosynthesis via DAP pathway; (S)-tetrahydrodipicolinate from L-aspartate: step 3/4. Functionally, catalyzes the condensation of (S)-aspartate-beta-semialdehyde [(S)-ASA] and pyruvate to 4-hydroxy-tetrahydrodipicolinate (HTPA). In Idiomarina loihiensis (strain ATCC BAA-735 / DSM 15497 / L2-TR), this protein is 4-hydroxy-tetrahydrodipicolinate synthase.